A 196-amino-acid chain; its full sequence is Fe/S biogenesis protein NfuA (196 aa).

2 residues coordinate [4Fe-4S] cluster: Cys154 and Cys157.

It belongs to the NfuA family. As to quaternary structure, homodimer. Requires [4Fe-4S] cluster as cofactor.

Its function is as follows. Involved in iron-sulfur cluster biogenesis. Binds a 4Fe-4S cluster, can transfer this cluster to apoproteins, and thereby intervenes in the maturation of Fe/S proteins. Could also act as a scaffold/chaperone for damaged Fe/S proteins. This is Fe/S biogenesis protein NfuA from Blochmanniella pennsylvanica (strain BPEN).